Consider the following 189-residue polypeptide: Orotate phosphoribosyltransferase (189 aa).

5-phospho-alpha-D-ribose 1-diphosphate is bound by residues arginine 94, lysine 95, lysine 98, and 120–128 (EDVTTTGGS). Orotate contacts are provided by threonine 124 and arginine 152.

This sequence belongs to the purine/pyrimidine phosphoribosyltransferase family. PyrE subfamily. As to quaternary structure, homodimer. Requires Mg(2+) as cofactor.

The catalysed reaction is orotidine 5'-phosphate + diphosphate = orotate + 5-phospho-alpha-D-ribose 1-diphosphate. The protein operates within pyrimidine metabolism; UMP biosynthesis via de novo pathway; UMP from orotate: step 1/2. Its function is as follows. Catalyzes the transfer of a ribosyl phosphate group from 5-phosphoribose 1-diphosphate to orotate, leading to the formation of orotidine monophosphate (OMP). This is Orotate phosphoribosyltransferase from Thermococcus gammatolerans (strain DSM 15229 / JCM 11827 / EJ3).